A 119-amino-acid chain; its full sequence is Large ribosomal subunit protein bL20 (119 aa).

It belongs to the bacterial ribosomal protein bL20 family.

Its function is as follows. Binds directly to 23S ribosomal RNA and is necessary for the in vitro assembly process of the 50S ribosomal subunit. It is not involved in the protein synthesizing functions of that subunit. The protein is Large ribosomal subunit protein bL20 of Syntrophus aciditrophicus (strain SB).